Here is a 192-residue protein sequence, read N- to C-terminus: Ion-translocating oxidoreductase complex subunit B (192 aa).

Positions 1–26 (MNTIWIAVGALTLLGLVFGAILGYAS) are hydrophobic. One can recognise a 4Fe-4S domain in the interval 32–91 (EDDPVVEKIDAILPQSQCGQCGYPGCRPYAEAVGLQGEKINRCAPGGEAVMLKMAELLNV). Cys-49, Cys-52, Cys-57, Cys-74, Cys-117, Cys-120, Cys-123, Cys-127, Cys-147, Cys-150, Cys-153, and Cys-157 together coordinate [4Fe-4S] cluster. 4Fe-4S ferredoxin-type domains lie at 108–137 (MLAV…GATR) and 138–167 (AMHT…LRPV).

This sequence belongs to the 4Fe4S bacterial-type ferredoxin family. RnfB subfamily. The complex is composed of six subunits: RsxA, RsxB, RsxC, RsxD, RsxE and RsxG. [4Fe-4S] cluster serves as cofactor.

The protein localises to the cell inner membrane. Part of a membrane-bound complex that couples electron transfer with translocation of ions across the membrane. Required to maintain the reduced state of SoxR. The protein is Ion-translocating oxidoreductase complex subunit B of Salmonella agona (strain SL483).